The primary structure comprises 155 residues: Large ribosomal subunit protein uL30 (155 aa).

Belongs to the universal ribosomal protein uL30 family. Part of the 50S ribosomal subunit.

The chain is Large ribosomal subunit protein uL30 from Cenarchaeum symbiosum (strain A).